The primary structure comprises 470 residues: Glutamyl-tRNA(Gln) amidotransferase subunit A (470 aa).

Catalysis depends on charge relay system residues Lys-71 and Ser-146. Catalysis depends on Ser-170, which acts as the Acyl-ester intermediate.

It belongs to the amidase family. GatA subfamily. As to quaternary structure, heterotrimer of A, B and C subunits.

The enzyme catalyses L-glutamyl-tRNA(Gln) + L-glutamine + ATP + H2O = L-glutaminyl-tRNA(Gln) + L-glutamate + ADP + phosphate + H(+). In terms of biological role, allows the formation of correctly charged Gln-tRNA(Gln) through the transamidation of misacylated Glu-tRNA(Gln) in organisms which lack glutaminyl-tRNA synthetase. The reaction takes place in the presence of glutamine and ATP through an activated gamma-phospho-Glu-tRNA(Gln). The polypeptide is Glutamyl-tRNA(Gln) amidotransferase subunit A (Akkermansia muciniphila (strain ATCC BAA-835 / DSM 22959 / JCM 33894 / BCRC 81048 / CCUG 64013 / CIP 107961 / Muc)).